A 120-amino-acid polypeptide reads, in one-letter code: IPGIVKDEVKPQVHTWTFADGKKIIVLSEGRLLNLGNATGHPSFVMSNSFADQTLAQIELYTKPEQYPTDVYVLPKHLDEKVARLHLDALGVKLTTLRPEQAEYIGVEVEGPYKPDHYRY.

Asn-34 contacts NAD(+).

The protein belongs to the adenosylhomocysteinase family. NAD(+) serves as cofactor.

The protein localises to the cytoplasm. It catalyses the reaction S-adenosyl-L-homocysteine + H2O = L-homocysteine + adenosine. The protein operates within amino-acid biosynthesis; L-homocysteine biosynthesis; L-homocysteine from S-adenosyl-L-homocysteine: step 1/1. Functionally, may play a key role in the regulation of the intracellular concentration of adenosylhomocysteine. This chain is Adenosylhomocysteinase (ahcY), found in Streptomyces fradiae (Streptomyces roseoflavus).